Reading from the N-terminus, the 237-residue chain is Ribosomal RNA small subunit methyltransferase G (237 aa).

Residues G78, F83, 129–130 (AE), and R148 contribute to the S-adenosyl-L-methionine site. The interval 218–237 (KKETPNKYPRKAGMPNKRPL) is disordered.

It belongs to the methyltransferase superfamily. RNA methyltransferase RsmG family.

The protein localises to the cytoplasm. Its function is as follows. Specifically methylates the N7 position of a guanine in 16S rRNA. The protein is Ribosomal RNA small subunit methyltransferase G of Streptococcus pneumoniae serotype 19F (strain G54).